The following is a 373-amino-acid chain: 4-hydroxy-3-methylbut-2-en-1-yl diphosphate synthase (flavodoxin) (373 aa).

[4Fe-4S] cluster-binding residues include C270, C273, C305, and E312.

This sequence belongs to the IspG family. [4Fe-4S] cluster serves as cofactor.

The catalysed reaction is (2E)-4-hydroxy-3-methylbut-2-enyl diphosphate + oxidized [flavodoxin] + H2O + 2 H(+) = 2-C-methyl-D-erythritol 2,4-cyclic diphosphate + reduced [flavodoxin]. Its pathway is isoprenoid biosynthesis; isopentenyl diphosphate biosynthesis via DXP pathway; isopentenyl diphosphate from 1-deoxy-D-xylulose 5-phosphate: step 5/6. Functionally, converts 2C-methyl-D-erythritol 2,4-cyclodiphosphate (ME-2,4cPP) into 1-hydroxy-2-methyl-2-(E)-butenyl 4-diphosphate. The protein is 4-hydroxy-3-methylbut-2-en-1-yl diphosphate synthase (flavodoxin) of Klebsiella pneumoniae (strain 342).